The following is a 235-amino-acid chain: Large ribosomal subunit protein uL1 (235 aa).

This sequence belongs to the universal ribosomal protein uL1 family. In terms of assembly, part of the 50S ribosomal subunit.

In terms of biological role, binds directly to 23S rRNA. The L1 stalk is quite mobile in the ribosome, and is involved in E site tRNA release. Protein L1 is also a translational repressor protein, it controls the translation of the L11 operon by binding to its mRNA. This Solidesulfovibrio magneticus (strain ATCC 700980 / DSM 13731 / RS-1) (Desulfovibrio magneticus) protein is Large ribosomal subunit protein uL1.